The primary structure comprises 273 residues: Embryonic polyadenylate-binding protein 2 (273 aa).

Residues 22-57 (SSDPEAQGWGAWGRTEKTSLVPRAGSRAGSDKEAEE) are disordered. An RRM domain is found at 143 to 220 (RSVFVGNVDY…RVIKVLPKRT (78 aa)).

The protein resides in the cytoplasm. Its function is as follows. Binds the poly(A) tail of mRNA. The chain is Embryonic polyadenylate-binding protein 2 (Pabpn1l) from Mus musculus (Mouse).